The primary structure comprises 139 residues: D-ribose pyranase (139 aa).

The active-site Proton donor is the His20. Substrate contacts are provided by residues Asp28, His106, and 128–130; that span reads YAN.

Belongs to the RbsD / FucU family. RbsD subfamily. In terms of assembly, homodecamer.

It localises to the cytoplasm. The enzyme catalyses beta-D-ribopyranose = beta-D-ribofuranose. It participates in carbohydrate metabolism; D-ribose degradation; D-ribose 5-phosphate from beta-D-ribopyranose: step 1/2. Functionally, catalyzes the interconversion of beta-pyran and beta-furan forms of D-ribose. The protein is D-ribose pyranase of Actinobacillus pleuropneumoniae serotype 7 (strain AP76).